The primary structure comprises 407 residues: Phosphopentomutase (407 aa).

Mn(2+) is bound by residues D10, D306, H311, D347, H348, and H359.

Belongs to the phosphopentomutase family. Mn(2+) is required as a cofactor.

The protein localises to the cytoplasm. The enzyme catalyses 2-deoxy-alpha-D-ribose 1-phosphate = 2-deoxy-D-ribose 5-phosphate. It carries out the reaction alpha-D-ribose 1-phosphate = D-ribose 5-phosphate. It functions in the pathway carbohydrate degradation; 2-deoxy-D-ribose 1-phosphate degradation; D-glyceraldehyde 3-phosphate and acetaldehyde from 2-deoxy-alpha-D-ribose 1-phosphate: step 1/2. Isomerase that catalyzes the conversion of deoxy-ribose 1-phosphate (dRib-1-P) and ribose 1-phosphate (Rib-1-P) to deoxy-ribose 5-phosphate (dRib-5-P) and ribose 5-phosphate (Rib-5-P), respectively. The polypeptide is Phosphopentomutase (Enterobacter sp. (strain 638)).